Here is a 61-residue protein sequence, read N- to C-terminus: Large ribosomal subunit protein uL30 (61 aa).

Belongs to the universal ribosomal protein uL30 family. As to quaternary structure, part of the 50S ribosomal subunit.

This Oenococcus oeni (strain ATCC BAA-331 / PSU-1) protein is Large ribosomal subunit protein uL30.